The sequence spans 388 residues: P2X purinoceptor 4 (388 aa).

The Cytoplasmic portion of the chain corresponds to 1–33; that stretch reads MAGCCSVLGSFLFEYDTPRIVLIRSRKVGLMNR. The chain crosses the membrane as a helical span at residues 34 to 54; it reads AVQLLILAYVIGWVFVWEKGY. Topologically, residues 55 to 338 are extracellular; the sequence is QETDSVVSSV…KFDIIPTMIN (284 aa). ATP contacts are provided by Lys-67 and Lys-69. CTP is bound by residues Lys-67 and Lys-69. 2 N-linked (GlcNAc...) asparagine glycosylation sites follow: Asn-75 and Asn-110. 3 disulfides stabilise this stretch: Cys-116–Cys-165, Cys-126–Cys-149, and Cys-132–Cys-159. Residues Asn-153 and Asn-184 are each glycosylated (N-linked (GlcNAc...) asparagine). Residues Thr-186 and Leu-188 each coordinate ATP. A CTP-binding site is contributed by Thr-186. N-linked (GlcNAc...) asparagine glycans are attached at residues Asn-199 and Asn-208. 2 cysteine pairs are disulfide-bonded: Cys-217–Cys-227 and Cys-261–Cys-270. ATP contacts are provided by Asn-293, Arg-295, and Lys-313. CTP contacts are provided by Asn-293, Arg-295, and Lys-313. Residues 339–359 form a helical membrane-spanning segment; it reads VGSGLALLGVATVLCDVIVLY. At 360–388 the chain is on the cytoplasmic side; sequence CMKKKYYYRDKKYKYVEDYEQGLSGEMNQ.

Belongs to the P2X receptor family. Functional P2RXs are organized as homomeric and heteromeric trimers. Forms heterotrimer with P2RX1. Interacts with P2RX7 (via C-terminus); this interaction is functional only in the presence of ATP. Forms heterotrimer with P2RX4; functional differences between homomeric P2RX4 and P2RX4/6 heterotrimer are minor. Interacts with AP1M2. In terms of tissue distribution, widespread distribution in the brain. Strongly expressed in microglial cells. Also expressed in epithelial cells.

Its subcellular location is the cell membrane. It is found in the lysosome membrane. It catalyses the reaction K(+)(in) = K(+)(out). The catalysed reaction is Na(+)(in) = Na(+)(out). It carries out the reaction Ca(2+)(in) = Ca(2+)(out). Its activity is regulated as follows. Activated by ATP. pH-dependent and inhibited by acidic pH. In terms of biological role, ATP-gated nonselective transmembrane cation channel permeable to potassium, sodium and calcium. CTP, but not GTP or UTP, functions as a weak affinity agonist for P2RX4. Activated by extracellularly released ATP, it plays multiple role in immunity and central nervous system physiology. Plays a key role in initial steps of T-cell activation and Ca(2+) microdomain formation. Also participates in basal T-cell activity without TCR/CD3 stimulation. Promotes the differentiation and activation of Th17 cells via expression of retinoic acid-related orphan receptor C/RORC. Upon activation, drives microglia motility via the PI3K/Akt pathway. Could also function as an ATP-gated cation channel of lysosomal membranes. In Rattus norvegicus (Rat), this protein is P2X purinoceptor 4 (P2rx4).